The primary structure comprises 969 residues: RNA polymerase-associated protein RapA (969 aa).

The region spanning 164–334 (EVGRRYAPRV…FARLRLLDPD (171 aa)) is the Helicase ATP-binding domain. An ATP-binding site is contributed by 177–184 (DEVGLGKT). The short motif at 280-283 (DEAH) is the DEAH box element. The 177-residue stretch at 492–668 (RVNWLLELLK…GKSDGLESLI (177 aa)) folds into the Helicase C-terminal domain.

Belongs to the SNF2/RAD54 helicase family. RapA subfamily. Interacts with the RNAP. Has a higher affinity for the core RNAP than for the holoenzyme. Its ATPase activity is stimulated by binding to RNAP.

In terms of biological role, transcription regulator that activates transcription by stimulating RNA polymerase (RNAP) recycling in case of stress conditions such as supercoiled DNA or high salt concentrations. Probably acts by releasing the RNAP, when it is trapped or immobilized on tightly supercoiled DNA. Does not activate transcription on linear DNA. Probably not involved in DNA repair. The sequence is that of RNA polymerase-associated protein RapA from Aliivibrio fischeri (strain MJ11) (Vibrio fischeri).